Consider the following 121-residue polypeptide: Somatostatin-1 (121 aa).

A signal peptide spans 1–24 (MKMVSSSRLRCLLVLLLSLTASIS). The propeptide occupies 25 to 105 (CSFAGQRDSK…SGGPLLAPRE (81 aa)). The interval 76-99 (NFPLAEGGPEDAHADLERAASGGP) is disordered. A disulfide bridge connects residues C110 and C121.

This sequence belongs to the somatostatin family.

It localises to the secreted. Somatostatin inhibits the release of somatotropin. The protein is Somatostatin-1 (sst1) of Lophius americanus (American angler).